We begin with the raw amino-acid sequence, 1310 residues long: Major viral transcription factor ICP4 homolog (1310 aa).

Disordered stretches follow at residues Ala-117–Glu-271, Gly-285–Ile-454, and Gly-636–Asp-696. The span at Pro-341–Glu-350 shows a compositional bias: basic and acidic residues. Low complexity-rich tracts occupy residues Phe-351 to Ser-364, Pro-392 to Ser-407, and Pro-648 to Ala-666. A Nuclear localization signal motif is present at residues Arg-677–Lys-685. Residues Ser-686 and Ser-722 each carry the phosphoserine; by VZV ORF66 modification. Disordered regions lie at residues Arg-1195–Val-1258 and Glu-1282–Gly-1310. Residues Arg-1217–Glu-1227 show a composition bias toward basic and acidic residues. Over residues Pro-1228–Asp-1250 the composition is skewed to acidic residues.

The protein belongs to the herpesviridae ICP4 family. In terms of assembly, interacts with IE4 and IE63. Interacts with human USF1 and SP1. In terms of processing, phosphorylated by ORF66 protein kinase on Ser-686 and Ser-722. Also phosphorylated by ORF47 protein kinase and by human CSNK2A1/CKII.

Its subcellular location is the host nucleus. The protein localises to the host cytoplasm. The protein resides in the virion tegument. Functionally, transcriptional transactivator. May interact with and recruit specific components of the general transcription machinery to viral promoters and stabilize their formation for transcription initiation. Negatively regulates its own transcription. This immediate early (EI) protein may be necessary in virion for viral pathogenesis. The chain is Major viral transcription factor ICP4 homolog from Homo sapiens (Human).